We begin with the raw amino-acid sequence, 300 residues long: Protoheme IX farnesyltransferase (300 aa).

Transmembrane regions (helical) follow at residues 24–44 (VTQLAVFCAVIGMFLATPGMV), 46–66 (WHVLIGGTVGIWLLAGAAFAI), 94–114 (PQILIFSAVLGSVGAWTLYTF), 118–138 (LTMWLTIATFVGYAVIYTLLL), 146–166 (IVIGGASGAMPPALGWAAVTG), 172–192 (AWILVLIIFVWTPPHFWVLAL), 217–237 (LHILLYTVILFAVTLMPFISG), 239–259 (SGAVYLTSAVLLGAVFLAYAW), and 278–298 (IVYLSLLFAALLVDHYARPLL).

The protein belongs to the UbiA prenyltransferase family. Protoheme IX farnesyltransferase subfamily.

The protein resides in the cell inner membrane. The catalysed reaction is heme b + (2E,6E)-farnesyl diphosphate + H2O = Fe(II)-heme o + diphosphate. It participates in porphyrin-containing compound metabolism; heme O biosynthesis; heme O from protoheme: step 1/1. In terms of biological role, converts heme B (protoheme IX) to heme O by substitution of the vinyl group on carbon 2 of heme B porphyrin ring with a hydroxyethyl farnesyl side group. This is Protoheme IX farnesyltransferase from Burkholderia lata (strain ATCC 17760 / DSM 23089 / LMG 22485 / NCIMB 9086 / R18194 / 383).